Consider the following 298-residue polypeptide: Protease HtpX homolog (298 aa).

The next 2 helical transmembrane spans lie at 16–36 (VMFGFGVLTLAIGAALGYLFW) and 38–58 (SWVSGTVIAAVVAVVYMLIMI). Zn(2+) is bound at residue H144. E145 is a catalytic residue. Residue H148 coordinates Zn(2+). 2 helical membrane-spanning segments follow: residues 159 to 179 (IALALSAAIGLLVNFASNWFW) and 197 to 217 (IIGLVISIFLIILAPLAASIA). E226 contributes to the Zn(2+) binding site.

This sequence belongs to the peptidase M48B family. The cofactor is Zn(2+).

The protein localises to the cell membrane. In Levilactobacillus brevis (strain ATCC 367 / BCRC 12310 / CIP 105137 / JCM 1170 / LMG 11437 / NCIMB 947 / NCTC 947) (Lactobacillus brevis), this protein is Protease HtpX homolog.